A 199-amino-acid polypeptide reads, in one-letter code: Molybdenum cofactor guanylyltransferase (199 aa).

Residues 12-14 (LAG), Lys25, Asn53, Asp71, and Asp101 contribute to the GTP site. Asp101 is a Mg(2+) binding site.

This sequence belongs to the MobA family. In terms of assembly, monomer. Mg(2+) serves as cofactor.

Its subcellular location is the cytoplasm. The catalysed reaction is Mo-molybdopterin + GTP + H(+) = Mo-molybdopterin guanine dinucleotide + diphosphate. Functionally, transfers a GMP moiety from GTP to Mo-molybdopterin (Mo-MPT) cofactor (Moco or molybdenum cofactor) to form Mo-molybdopterin guanine dinucleotide (Mo-MGD) cofactor. The protein is Molybdenum cofactor guanylyltransferase of Cupriavidus taiwanensis (strain DSM 17343 / BCRC 17206 / CCUG 44338 / CIP 107171 / LMG 19424 / R1) (Ralstonia taiwanensis (strain LMG 19424)).